Consider the following 468-residue polypeptide: ATP synthase subunit beta (468 aa).

Residue 155–162 (GGAGVGKT) coordinates ATP.

This sequence belongs to the ATPase alpha/beta chains family. F-type ATPases have 2 components, CF(1) - the catalytic core - and CF(0) - the membrane proton channel. CF(1) has five subunits: alpha(3), beta(3), gamma(1), delta(1), epsilon(1). CF(0) has three main subunits: a(1), b(2) and c(9-12). The alpha and beta chains form an alternating ring which encloses part of the gamma chain. CF(1) is attached to CF(0) by a central stalk formed by the gamma and epsilon chains, while a peripheral stalk is formed by the delta and b chains.

Its subcellular location is the cell membrane. It catalyses the reaction ATP + H2O + 4 H(+)(in) = ADP + phosphate + 5 H(+)(out). Functionally, produces ATP from ADP in the presence of a proton gradient across the membrane. The catalytic sites are hosted primarily by the beta subunits. This is ATP synthase subunit beta from Streptococcus agalactiae serotype Ia (strain ATCC 27591 / A909 / CDC SS700).